The chain runs to 467 residues: Ribulose bisphosphate carboxylase large chain (467 aa).

Positions 1–2 (MS) are excised as a propeptide. P3 carries the post-translational modification N-acetylproline. K14 bears the N6,N6,N6-trimethyllysine mark. Substrate is bound by residues N123 and T173. The Proton acceptor role is filled by K175. K177 contacts substrate. Positions 201, 203, and 204 each coordinate Mg(2+). K201 is subject to N6-carboxylysine. Residue H294 is the Proton acceptor of the active site. Substrate contacts are provided by R295, H327, and S379.

This sequence belongs to the RuBisCO large chain family. Type I subfamily. In terms of assembly, heterohexadecamer of 8 large chains and 8 small chains; disulfide-linked. The disulfide link is formed within the large subunit homodimers. Mg(2+) is required as a cofactor. Post-translationally, the disulfide bond which can form in the large chain dimeric partners within the hexadecamer appears to be associated with oxidative stress and protein turnover.

It is found in the plastid. It localises to the chloroplast. It catalyses the reaction 2 (2R)-3-phosphoglycerate + 2 H(+) = D-ribulose 1,5-bisphosphate + CO2 + H2O. The enzyme catalyses D-ribulose 1,5-bisphosphate + O2 = 2-phosphoglycolate + (2R)-3-phosphoglycerate + 2 H(+). RuBisCO catalyzes two reactions: the carboxylation of D-ribulose 1,5-bisphosphate, the primary event in carbon dioxide fixation, as well as the oxidative fragmentation of the pentose substrate in the photorespiration process. Both reactions occur simultaneously and in competition at the same active site. This chain is Ribulose bisphosphate carboxylase large chain, found in Phoenix reclinata (Senegal date palm).